The sequence spans 64 residues: Conotoxin Vc1.3 (64 aa).

Positions 1-21 are cleaved as a signal peptide; that stretch reads MGMRMMFTVFLLVVLATTVVS. Positions 22 to 43 are excised as a propeptide; that stretch reads FTSDRASDGRKAAASDLITLTI. 2 disulfides stabilise this stretch: C46–C52 and C47–C60. Residue C60 is modified to Cysteine amide.

This sequence belongs to the conotoxin A superfamily. In terms of tissue distribution, expressed by the venom duct.

Its subcellular location is the secreted. May act as a toxin. The protein is Conotoxin Vc1.3 of Conus victoriae (Queen Victoria cone).